The chain runs to 307 residues: Formate hydrogenlyase subunit 4 (307 aa).

Topologically, residues 1-2 are periplasmic; the sequence is MS. Residues 3 to 23 traverse the membrane as a helical segment; the sequence is VLYPLIQALVLFAVAPLLSGI. Topologically, residues 24–67 are cytoplasmic; sequence TRVARARLHNRRGPGVLQEYRDIIKLLGRQSVGPDASGWVFRLT. The helical transmembrane segment at 68–88 threads the bilayer; it reads PYVMVGVMLTIATALPVVTVG. Residues 89–93 are Periplasmic-facing; sequence SPLPQ. Residues 94–114 form a helical membrane-spanning segment; it reads LGDLITLLYLFAIARFFFAIS. Residues 115–131 lie on the Cytoplasmic side of the membrane; sequence GLDTGSPFTAIGASREA. The helical transmembrane segment at 132–152 threads the bilayer; that stretch reads MLGVLVEPMLLLGLWVAAQVA. The Periplasmic portion of the chain corresponds to 153–167; sequence GSTNISNITDTVYHW. Residues 168 to 188 traverse the membrane as a helical segment; that stretch reads PLSQSIPLVLALCACAFATFI. Topologically, residues 189-221 are cytoplasmic; sequence EMGKLPFDLAEAEQELQEGPLSEYSGSGFGVMK. Residues 222 to 242 form a helical membrane-spanning segment; that stretch reads WGISLKQLVVLQMFVGVFIPW. Residues 243–253 are Periplasmic-facing; it reads GQMETFTAGGL. The helical transmembrane segment at 254–274 threads the bilayer; that stretch reads LLALVIAIVKLVVGVLVIALF. The Cytoplasmic portion of the chain corresponds to 275 to 284; it reads ENSMARLRLD. Residues 285–305 form a helical membrane-spanning segment; sequence ITPRITWAGFGFAFLAFVSLL. Residues 306–307 lie on the Periplasmic side of the membrane; the sequence is AA.

The protein belongs to the complex I subunit 1 family. In terms of assembly, FHL comprises of a formate dehydrogenase, unidentified electron carriers and a hydrogenase (isoenzyme 3). In this non-energy conserving pathway molecular hydrogen and carbodioxide from formate are released.

The protein resides in the cell inner membrane. This Escherichia coli (strain K12) protein is Formate hydrogenlyase subunit 4 (hycD).